The primary structure comprises 397 residues: Ubiquitin-like modifier-activating enzyme 5 (397 aa).

ATP is bound by residues G77, D98, K121, N144, and N178. C220 and C223 together coordinate Zn(2+). C244 acts as the Glycyl thioester intermediate in catalysis. Zn(2+) contacts are provided by C297 and C302. Positions 329-341 (VVHEDNDWGIELV) match the UFM1-interacting sequence (UIS) motif. The interval 342–372 (SEVSEEELKAASGPVPDLPEGIKVAYTIPIT) is linker. The short motif at 382-397 (DSEQSLDELMAQMKNL) is the UFC1-binding sequence (UFC) element.

This sequence belongs to the ubiquitin-activating E1 family. UBA5 subfamily. As to quaternary structure, homodimer; homodimerization is required for ufm1 activation. Interacts (via UIS motif) with ufm1; binds ufm1 via a trans-binding mechanism in which ufm1 interacts with distinct sites in both subunits of the uba5 homodimer. Interacts (via C-terminus) with ufc1.

Its subcellular location is the cytoplasm. The protein resides in the nucleus. The protein localises to the endoplasmic reticulum membrane. It is found in the golgi apparatus. Functionally, E1-like enzyme which specifically catalyzes the first step in ufmylation. Activates ufm1 by first adenylating its C-terminal glycine residue with ATP, and thereafter linking this residue to the side chain of a cysteine residue in E1, yielding a ufm1-E1 thioester and free AMP. Activates ufm1 via a trans-binding mechanism, in which ufm1 interacts with distinct sites in both subunits of the uba5 homodimer. Trans-binding also promotes stabilization of the uba5 homodimer, and enhances ATP-binding. Transfer of ufm1 from uba5 to the E2-like enzyme UFC1 also takes place using a trans mechanism. Ufmylation plays a key role in various processes, such as ribosome recycling, response to DNA damage, interferon response or reticulophagy (also called ER-phagy). This chain is Ubiquitin-like modifier-activating enzyme 5, found in Xenopus laevis (African clawed frog).